Consider the following 250-residue polypeptide: Hydroxyacylglutathione hydrolase (250 aa).

Zn(2+) contacts are provided by histidine 53, histidine 55, aspartate 57, histidine 58, histidine 110, aspartate 127, and histidine 165.

Belongs to the metallo-beta-lactamase superfamily. Glyoxalase II family. Monomer. Requires Zn(2+) as cofactor.

It carries out the reaction an S-(2-hydroxyacyl)glutathione + H2O = a 2-hydroxy carboxylate + glutathione + H(+). Its pathway is secondary metabolite metabolism; methylglyoxal degradation; (R)-lactate from methylglyoxal: step 2/2. In terms of biological role, thiolesterase that catalyzes the hydrolysis of S-D-lactoyl-glutathione to form glutathione and D-lactic acid. In Photorhabdus laumondii subsp. laumondii (strain DSM 15139 / CIP 105565 / TT01) (Photorhabdus luminescens subsp. laumondii), this protein is Hydroxyacylglutathione hydrolase.